The following is a 253-amino-acid chain: Ubiquinone/menaquinone biosynthesis C-methyltransferase UbiE (253 aa).

Residues Thr76, Asp97, Asn125–Ala126, and Ser142 each bind S-adenosyl-L-methionine.

It belongs to the class I-like SAM-binding methyltransferase superfamily. MenG/UbiE family.

It carries out the reaction a 2-demethylmenaquinol + S-adenosyl-L-methionine = a menaquinol + S-adenosyl-L-homocysteine + H(+). It catalyses the reaction a 2-methoxy-6-(all-trans-polyprenyl)benzene-1,4-diol + S-adenosyl-L-methionine = a 5-methoxy-2-methyl-3-(all-trans-polyprenyl)benzene-1,4-diol + S-adenosyl-L-homocysteine + H(+). It participates in quinol/quinone metabolism; menaquinone biosynthesis; menaquinol from 1,4-dihydroxy-2-naphthoate: step 2/2. It functions in the pathway cofactor biosynthesis; ubiquinone biosynthesis. Functionally, methyltransferase required for the conversion of demethylmenaquinol (DMKH2) to menaquinol (MKH2) and the conversion of 2-polyprenyl-6-methoxy-1,4-benzoquinol (DDMQH2) to 2-polyprenyl-3-methyl-6-methoxy-1,4-benzoquinol (DMQH2). The chain is Ubiquinone/menaquinone biosynthesis C-methyltransferase UbiE from Xanthomonas campestris pv. campestris (strain ATCC 33913 / DSM 3586 / NCPPB 528 / LMG 568 / P 25).